The sequence spans 142 residues: Large ribosomal subunit protein uL11 (142 aa).

This sequence belongs to the universal ribosomal protein uL11 family. In terms of assembly, part of the ribosomal stalk of the 50S ribosomal subunit. Interacts with L10 and the large rRNA to form the base of the stalk. L10 forms an elongated spine to which L12 dimers bind in a sequential fashion forming a multimeric L10(L12)X complex. In terms of processing, one or more lysine residues are methylated.

Forms part of the ribosomal stalk which helps the ribosome interact with GTP-bound translation factors. This Acinetobacter baumannii (strain AB307-0294) protein is Large ribosomal subunit protein uL11.